The chain runs to 632 residues: Thioredoxin domain-containing protein C959.05c (632 aa).

Residues 1–22 (MKLFLYHFTFIVYYFIISFSYA) form the signal peptide. Residues N35, N41, and N140 are each glycosylated (N-linked (GlcNAc...) asparagine). Residues 153–284 (SDSSSTDPAF…LLSYSNQVAS (132 aa)) enclose the Thioredoxin domain. An intrachain disulfide couples C209 to C212. N557 is a glycosylation site (N-linked (GlcNAc...) asparagine). Residues 583–603 (LIVFNLLIALLILSILTIISA) form a helical membrane-spanning segment.

This sequence belongs to the protein disulfide isomerase family.

The protein resides in the endoplasmic reticulum membrane. The enzyme catalyses Catalyzes the rearrangement of -S-S- bonds in proteins.. In terms of biological role, acts as a membrane-bound chaperone in endoplasmic reticulum quality control. Probably facilitates presentation of substrate to membrane-bound components of the degradation machinery. In Schizosaccharomyces pombe (strain 972 / ATCC 24843) (Fission yeast), this protein is Thioredoxin domain-containing protein C959.05c.